The chain runs to 248 residues: Ribonuclease PH (248 aa).

Residues arginine 86 and glycine 124–arginine 126 contribute to the phosphate site.

This sequence belongs to the RNase PH family. Homohexameric ring arranged as a trimer of dimers.

The enzyme catalyses tRNA(n+1) + phosphate = tRNA(n) + a ribonucleoside 5'-diphosphate. Its function is as follows. Phosphorolytic 3'-5' exoribonuclease that plays an important role in tRNA 3'-end maturation. Removes nucleotide residues following the 3'-CCA terminus of tRNAs; can also add nucleotides to the ends of RNA molecules by using nucleoside diphosphates as substrates, but this may not be physiologically important. Probably plays a role in initiation of 16S rRNA degradation (leading to ribosome degradation) during starvation. The polypeptide is Ribonuclease PH (Listeria innocua serovar 6a (strain ATCC BAA-680 / CLIP 11262)).